We begin with the raw amino-acid sequence, 290 residues long: Chitinase 10 (290 aa).

Residues Met1–Gly28 form the signal peptide. 2 cysteine pairs are disulfide-bonded: Cys70–Cys132 and Cys144–Cys153. Catalysis depends on Glu114, which acts as the Proton donor. N-linked (GlcNAc...) asparagine glycosylation is found at Asn193 and Asn234. A disulfide bridge connects residues Cys252 and Cys284.

This sequence belongs to the glycosyl hydrolase 19 family. Chitinase class I subfamily. As to expression, expressed at low levels in roots, leaves and meristems.

It carries out the reaction Random endo-hydrolysis of N-acetyl-beta-D-glucosaminide (1-&gt;4)-beta-linkages in chitin and chitodextrins.. The protein is Chitinase 10 (Cht10) of Oryza sativa subsp. japonica (Rice).